A 304-amino-acid chain; its full sequence is MIDVIVLGAAAGGGFPQWNSAAPGCVAARTRQGAKARTQASLAVSADGKRWFILNASPDLRQQIIDTPALHHQGSLRGTPIQGVVLTCGEIDAITGLLTLREREPFTLMGSDSTLQQLADNPIFGALDPEIVPRVPLILDEATSLMNKDGIPSGLLLTAFAVPGKAPLYAEAAGSRPDETLGLSITDGCKTMLFIPGCAQITSEIVERVAAADLVFFDGTLWRDDEMIRAGLSPKSGQRMGHVSVNDAGGPVECFTTCEKPRKVLIHINNSNPILFEDSPERKDVERAGWTVAEDGMTFRLDTP.

Belongs to the PqqB family.

It functions in the pathway cofactor biosynthesis; pyrroloquinoline quinone biosynthesis. Its function is as follows. May be involved in the transport of PQQ or its precursor to the periplasm. This Gluconobacter oxydans (strain 621H) (Gluconobacter suboxydans) protein is Coenzyme PQQ synthesis protein B.